Reading from the N-terminus, the 226-residue chain is Thioredoxin domain-containing protein 9 (226 aa).

The region spanning 74-180 (REIPSERDFF…TTETLEWRLG (107 aa)) is the Thioredoxin domain. A phosphoserine mark is found at serine 188, serine 221, and serine 223.

As to quaternary structure, forms ternary complexes with the chaperonin TCP1 complex, spanning the cylindrical chaperonin cavity and contacting at least 2 subunits.

The protein resides in the cytoplasm. The protein localises to the nucleus. Its subcellular location is the cytoskeleton. It is found in the microtubule organizing center. It localises to the centrosome. The protein resides in the midbody. Its function is as follows. Significantly diminishes the chaperonin TCP1 complex ATPase activity, thus negatively impacts protein folding, including that of actin or tubulin. The chain is Thioredoxin domain-containing protein 9 (TXNDC9) from Homo sapiens (Human).